The primary structure comprises 488 residues: Inosine-5'-monophosphate dehydrogenase (488 aa).

CBS domains lie at 95 to 153 (VITN…SIKI) and 157 to 213 (MTKE…PHAA). NAD(+) contacts are provided by residues Asp250 and 300–302 (GIG). The K(+) site is built by Gly302 and Gly304. Ser305 serves as a coordination point for IMP. A K(+)-binding site is contributed by Cys307. Cys307 functions as the Thioimidate intermediate in the catalytic mechanism. Residues 340 to 342 (DGG), 363 to 364 (GS), and 387 to 391 (YRGMG) contribute to the IMP site. Catalysis depends on Arg403, which acts as the Proton acceptor. IMP is bound at residue Glu417. The disordered stretch occupies residues 467-488 (AGLAESHPHNVQITKESPNYSF). Positions 471, 472, and 473 each coordinate K(+). Over residues 475–488 (HNVQITKESPNYSF) the composition is skewed to polar residues.

It belongs to the IMPDH/GMPR family. As to quaternary structure, homotetramer. K(+) is required as a cofactor.

The enzyme catalyses IMP + NAD(+) + H2O = XMP + NADH + H(+). It participates in purine metabolism; XMP biosynthesis via de novo pathway; XMP from IMP: step 1/1. With respect to regulation, mycophenolic acid (MPA) is a non-competitive inhibitor that prevents formation of the closed enzyme conformation by binding to the same site as the amobile flap. In contrast, mizoribine monophosphate (MZP) is a competitive inhibitor that induces the closed conformation. MPA is a potent inhibitor of mammalian IMPDHs but a poor inhibitor of the bacterial enzymes. MZP is a more potent inhibitor of bacterial IMPDH. Catalyzes the conversion of inosine 5'-phosphate (IMP) to xanthosine 5'-phosphate (XMP), the first committed and rate-limiting step in the de novo synthesis of guanine nucleotides, and therefore plays an important role in the regulation of cell growth. This Staphylococcus haemolyticus (strain JCSC1435) protein is Inosine-5'-monophosphate dehydrogenase.